The sequence spans 463 residues: Fibrinogen beta chain (463 aa).

Over residues Ala1–Pro12 the composition is skewed to acidic residues. The disordered stretch occupies residues Ala1–Met56. Position 5 is a sulfotyrosine (Tyr5). A compositionally biased stretch (basic and acidic residues) spans Ala16 to Glu27. 2 disulfide bridges follow: Cys205/Cys289 and Cys215/Cys244. A Fibrinogen C-terminal domain is found at Asn206–Phe461. Asn367 carries an N-linked (GlcNAc...) asparagine glycan. 3 residues coordinate Ca(2+): Asp384, Asp386, and Trp388. A disulfide bond links Cys397 and Cys410.

As to quaternary structure, heterohexamer; disulfide linked. Contains 2 sets of 3 non-identical chains (alpha, beta and gamma). The 2 heterotrimers are in head to head conformation with the N-termini in a small central domain. In terms of processing, conversion of fibrinogen to fibrin is triggered by thrombin, which cleaves fibrinopeptides A and B from alpha and beta chains, and thus exposes the N-terminal polymerization sites responsible for the formation of the soft clot. The soft clot is converted into the hard clot by factor XIIIA which catalyzes the epsilon-(gamma-glutamyl)lysine cross-linking between gamma chains (stronger) and between alpha chains (weaker) of different monomers.

The protein localises to the secreted. Functionally, cleaved by the protease thrombin to yield monomers which, together with fibrinogen alpha (FGA) and fibrinogen gamma (FGG), polymerize to form an insoluble fibrin matrix. Fibrin has a major function in hemostasis as one of the primary components of blood clots. This Gallus gallus (Chicken) protein is Fibrinogen beta chain (FGB).